The sequence spans 314 residues: DNA-directed RNA polymerase subunit alpha (314 aa).

The interval 1 to 228 (MIEIEKPKIE…EHLNIFVGLT (228 aa)) is alpha N-terminal domain (alpha-NTD). The segment at 245-314 (KEKVLEMTIE…ELGLGLRKDD (70 aa)) is alpha C-terminal domain (alpha-CTD).

It belongs to the RNA polymerase alpha chain family. Homodimer. RNAP is composed of a core of 2 alpha, a beta and a beta' subunit. The core is associated with a delta subunit, and at least one of epsilon or omega. When a sigma factor is associated with the core the holoenzyme is formed, which can initiate transcription.

The enzyme catalyses RNA(n) + a ribonucleoside 5'-triphosphate = RNA(n+1) + diphosphate. DNA-dependent RNA polymerase catalyzes the transcription of DNA into RNA using the four ribonucleoside triphosphates as substrates. In Bacillus subtilis (strain 168), this protein is DNA-directed RNA polymerase subunit alpha.